Here is a 512-residue protein sequence, read N- to C-terminus: Immunoglobulin delta heavy chain (512 aa).

Ig-like domains lie at 1-97 (RLQL…MYYC) and 135-227 (PDVF…KEIF). The interval 1 to 129 (RLQLQESGPG…GQGTTVHVSS (129 aa)) is variable (V) domain, involved in antigen recognition. Cystine bridges form between Cys22–Cys97 and Cys157–Cys213. Residues 130-512 (APTKAPDVFP…VSYVTDHGPM (383 aa)) are constant (C) domain. Residues 225-296 (EIFRWPESPK…TPECPSHTQP (72 aa)) are disordered. Residues 235–247 (AQASSVPTAQPQA) show a composition bias toward polar residues. A glycan (O-linked (GalNAc...) serine) is linked at Ser238. Thr255, Thr256, Thr260, and Thr261 each carry an O-linked (GalNAc...) threonine glycan. Positions 267–287 (GGEEKKKEKEKEEQEERETKT) are enriched in basic and acidic residues. Ig-like domains follow at residues 304 to 392 (PAVQ…RLMA) and 396 to 502 (PAAQ…RSLE). Cystine bridges form between Cys319/Cys378 and Cys423/Cys484. Residues Asn354, Asn445, and Asn496 are each glycosylated (N-linked (GlcNAc...) asparagine).

As to quaternary structure, immunoglobulins are composed of two identical heavy chains and two identical light chains; disulfide-linked. An IgD molecule contains thus a delta heavy chain combined with either a kappa or a lambda light chains. Kappa light chains are found predominantly on the membrane IgD (mIgD) form and lambda on the secreted IgD (sIgD) form, this fact is poorly understood. Membrane-bound IgD molecules are non-covalently associated with a heterodimer of CD79A and CD79B.

Its subcellular location is the secreted. It is found in the cell membrane. In terms of biological role, immunoglobulins, also known as antibodies, are membrane-bound or secreted glycoproteins produced by B lymphocytes. In the recognition phase of humoral immunity, the membrane-bound immunoglobulins serve as receptors which, upon binding of a specific antigen, trigger the clonal expansion and differentiation of B lymphocytes into immunoglobulins-secreting plasma cells. Secreted immunoglobulins mediate the effector phase of humoral immunity, which results in the elimination of bound antigens. The antigen binding site is formed by the variable domain of one heavy chain, together with that of its associated light chain. Thus, each immunoglobulin has two antigen binding sites with remarkable affinity for a particular antigen. The variable domains are assembled by a process called V-(D)-J rearrangement and can then be subjected to somatic hypermutations which, after exposure to antigen and selection, allow affinity maturation for a particular antigen. IgD is the major antigen receptor isotype on the surface of most peripheral B cells, where it is coexpressed with IgM. The membrane-bound IgD (mIgD) induces the phosphorylation of CD79A and CD79B by the Src family of protein tyrosine kinases. Soluble IgD (sIgD) concentration in serum is below those of IgG, IgA, and IgM but much higher than that of IgE. IgM and IgD molecules present on B cells have identical V regions and antigen-binding sites. After the antigen binds to the B cell receptor, the secreted form sIgD is shut off. IgD is a potent inducer of TNF, IL1B, and IL1RN. IgD also induces release of IL6, IL10, and LIF from peripheral blood mononuclear cells. Monocytes seem to be the main producers of cytokines in vitro in the presence of IgD. This is Immunoglobulin delta heavy chain from Homo sapiens (Human).